Reading from the N-terminus, the 152-residue chain is UPF0735 ACT domain-containing protein CTC_00116 (152 aa).

An ACT domain is found at 76–151; that stretch reads IISVTLNHRP…NVIKLDLIAM (76 aa).

Belongs to the UPF0735 family.

The polypeptide is UPF0735 ACT domain-containing protein CTC_00116 (Clostridium tetani (strain Massachusetts / E88)).